Reading from the N-terminus, the 144-residue chain is Cell division protein SepF (144 aa).

Belongs to the SepF family. As to quaternary structure, homodimer. Interacts with FtsZ.

Its subcellular location is the cytoplasm. In terms of biological role, cell division protein that is part of the divisome complex and is recruited early to the Z-ring. Probably stimulates Z-ring formation, perhaps through the cross-linking of FtsZ protofilaments. Its function overlaps with FtsA. The polypeptide is Cell division protein SepF (Geobacillus sp. (strain WCH70)).